The primary structure comprises 334 residues: NmrA-like family domain-containing oxidoreductase lnaB (334 aa).

Residues 12–17 (GGTGKQ), 38–42 (RNAQS), 59–60 (DG), 80–82 (INS), lysine 138, and 162–165 (FLEN) contribute to the NADP(+) site.

It belongs to the NmrA-type oxidoreductase family.

The protein operates within secondary metabolite biosynthesis. Functionally, nmrA-like family domain-containing oxidoreductase; part of the lna gene cluster that mediates the biosynthesis of diastereomeric piperazines. Lna and lnb clusters encode sets of enzymes that produce overlapping sets of previously undescribed metabolites such as piperazinomycin-like metabolites or morpholine. The lna and lnb biosynthetic pathways appear to be part of a signaling network that controls the formation of sclerotia, a resilient overwintering structure. One primary function of the non-canonical nonribosomal peptide synthetases lnaA and lnbA consists in the reduction of L-tyrosine. The presence in the clusters of tailoring enzymes such as the oxidoreductases lnaB, lnbB, lnaE or lnbE, as well as of the cytochrome P450 monooxygenases lnaC, lnaD, or lnbC, might explain formation of various diastereomeric piperazines. The polypeptide is NmrA-like family domain-containing oxidoreductase lnaB (Aspergillus flavus (strain ATCC 200026 / FGSC A1120 / IAM 13836 / NRRL 3357 / JCM 12722 / SRRC 167)).